Here is a 269-residue protein sequence, read N- to C-terminus: tRNA pseudouridine synthase A (269 aa).

D52 serves as the catalytic Nucleophile. Y110 contributes to the substrate binding site.

This sequence belongs to the tRNA pseudouridine synthase TruA family. In terms of assembly, homodimer.

It catalyses the reaction uridine(38/39/40) in tRNA = pseudouridine(38/39/40) in tRNA. Functionally, formation of pseudouridine at positions 38, 39 and 40 in the anticodon stem and loop of transfer RNAs. The protein is tRNA pseudouridine synthase A of Bacteroides thetaiotaomicron (strain ATCC 29148 / DSM 2079 / JCM 5827 / CCUG 10774 / NCTC 10582 / VPI-5482 / E50).